The primary structure comprises 344 residues: MDRQKALEAAVSQIERAFGKGSIMKLGGKDQVVETEVVSTRILGLDVALGIGGVPRGRIIEVYGPESSGKTTLALHIIAEAQKKGGTCAFVDAEHALDPSYARKLGALDELLISEPDAGEQALEIADTLVRPGAVDVLVVDSVAALVPRGELEGEMGDNHMGLHARLMSQALRKLTGSVSKSKTIVIFINQIRMKIGVMFGNPETTTGGNALKFYASVRMEIRRVGAIKDRDEVVGNQTRVKVVKNKLAPPFKVVDFDIMYGEGISKMGELIDLGVKANVVKKSGAWFSYNSTRIGQGRENAKQFLRDNPAMAAEIEGAIRQNAGLISEALAAVPDLDGTPVAE.

64 to 71 (GPESSGKT) contacts ATP.

Belongs to the RecA family.

It localises to the cytoplasm. Functionally, can catalyze the hydrolysis of ATP in the presence of single-stranded DNA, the ATP-dependent uptake of single-stranded DNA by duplex DNA, and the ATP-dependent hybridization of homologous single-stranded DNAs. It interacts with LexA causing its activation and leading to its autocatalytic cleavage. This is Protein RecA from Paramagnetospirillum magnetotacticum (Aquaspirillum magnetotacticum).